A 441-amino-acid polypeptide reads, in one-letter code: ATP-dependent protease ATPase subunit HslU (441 aa).

ATP contacts are provided by residues Ile18, Gly60 to Glu65, Asp254, Glu319, and Arg391.

This sequence belongs to the ClpX chaperone family. HslU subfamily. In terms of assembly, a double ring-shaped homohexamer of HslV is capped on each side by a ring-shaped HslU homohexamer. The assembly of the HslU/HslV complex is dependent on binding of ATP.

Its subcellular location is the cytoplasm. Its function is as follows. ATPase subunit of a proteasome-like degradation complex; this subunit has chaperone activity. The binding of ATP and its subsequent hydrolysis by HslU are essential for unfolding of protein substrates subsequently hydrolyzed by HslV. HslU recognizes the N-terminal part of its protein substrates and unfolds these before they are guided to HslV for hydrolysis. The protein is ATP-dependent protease ATPase subunit HslU of Shewanella piezotolerans (strain WP3 / JCM 13877).